We begin with the raw amino-acid sequence, 199 residues long: WASH complex subunit 3 (199 aa).

Positions 47–76 (VCEEKLSALSLRIQQIETTLNILEAKLSSI) form a coiled coil. Positions 93 to 120 (NISNGHLPSQPDAQSVVVSPQSDNNSMN) are enriched in polar residues. Disordered stretches follow at residues 93-136 (NISN…NITT) and 170-199 (PDLL…SFSD). The span at 183 to 192 (GEPEAEESSD) shows a compositional bias: acidic residues.

Belongs to the CCDC53 family. As to quaternary structure, component of the WASH complex.

The polypeptide is WASH complex subunit 3 (Xenopus laevis (African clawed frog)).